The primary structure comprises 139 residues: Class I hydrophobin A (139 aa).

An N-terminal signal peptide occupies residues 1–18 (MKFSIAAAVLALASAVVA). 4 cysteine pairs are disulfide-bonded: Cys-45-Cys-113, Cys-53-Cys-107, Cys-54-Cys-88, and Cys-114-Cys-133.

Belongs to the fungal hydrophobin family. As to quaternary structure, self-assembles to form functional amyloid fibrils called rodlets. Self-assembly into fibrillar rodlets occurs spontaneously at hydrophobic:hydrophilic interfaces and the rodlets further associate laterally to form amphipathic monolayers.

Its subcellular location is the secreted. The protein localises to the cell wall. In terms of biological role, aerial growth, conidiation, and dispersal of filamentous fungi in the environment rely upon a capability of their secreting small amphipathic proteins called hydrophobins (HPBs) with low sequence identity. Class I can self-assemble into an outermost layer of rodlet bundles on aerial cell surfaces, conferring cellular hydrophobicity that supports fungal growth, development and dispersal; whereas Class II form highly ordered films at water-air interfaces through intermolecular interactions but contribute nothing to the rodlet structure. HYPA is a class I hydrophobin that contributes to surface hydrophobicity, and prevents recognition by the cellular immune defense system. The polypeptide is Class I hydrophobin A (Arthroderma benhamiae (strain ATCC MYA-4681 / CBS 112371) (Trichophyton mentagrophytes)).